Reading from the N-terminus, the 456-residue chain is Bifunctional protein GlmU (456 aa).

Positions 1-229 are pyrophosphorylase; it reads MYKCALILAA…FEEILGVNSR (229 aa). UDP-N-acetyl-alpha-D-glucosamine is bound by residues 8-11, Lys-22, Gln-73, and 78-79; these read LAAG and GT. A Mg(2+)-binding site is contributed by Asp-103. Positions 140, 155, 170, and 227 each coordinate UDP-N-acetyl-alpha-D-glucosamine. Asn-227 contributes to the Mg(2+) binding site. A linker region spans residues 230–250; the sequence is LQLCQVGKVMQKRINEKHMEN. An N-acetyltransferase region spans residues 251-456; that stretch reads GSTLIDPDNT…GWVDKKGLLK (206 aa). 2 residues coordinate UDP-N-acetyl-alpha-D-glucosamine: Arg-332 and Lys-350. His-362 functions as the Proton acceptor in the catalytic mechanism. Positions 365 and 376 each coordinate UDP-N-acetyl-alpha-D-glucosamine. Residues 385–386, Ala-422, and Arg-439 contribute to the acetyl-CoA site; that span reads NY.

It in the N-terminal section; belongs to the N-acetylglucosamine-1-phosphate uridyltransferase family. In the C-terminal section; belongs to the transferase hexapeptide repeat family. As to quaternary structure, homotrimer. The cofactor is Mg(2+).

It localises to the cytoplasm. It carries out the reaction alpha-D-glucosamine 1-phosphate + acetyl-CoA = N-acetyl-alpha-D-glucosamine 1-phosphate + CoA + H(+). The catalysed reaction is N-acetyl-alpha-D-glucosamine 1-phosphate + UTP + H(+) = UDP-N-acetyl-alpha-D-glucosamine + diphosphate. It participates in nucleotide-sugar biosynthesis; UDP-N-acetyl-alpha-D-glucosamine biosynthesis; N-acetyl-alpha-D-glucosamine 1-phosphate from alpha-D-glucosamine 6-phosphate (route II): step 2/2. It functions in the pathway nucleotide-sugar biosynthesis; UDP-N-acetyl-alpha-D-glucosamine biosynthesis; UDP-N-acetyl-alpha-D-glucosamine from N-acetyl-alpha-D-glucosamine 1-phosphate: step 1/1. The protein operates within bacterial outer membrane biogenesis; LPS lipid A biosynthesis. Functionally, catalyzes the last two sequential reactions in the de novo biosynthetic pathway for UDP-N-acetylglucosamine (UDP-GlcNAc). The C-terminal domain catalyzes the transfer of acetyl group from acetyl coenzyme A to glucosamine-1-phosphate (GlcN-1-P) to produce N-acetylglucosamine-1-phosphate (GlcNAc-1-P), which is converted into UDP-GlcNAc by the transfer of uridine 5-monophosphate (from uridine 5-triphosphate), a reaction catalyzed by the N-terminal domain. The chain is Bifunctional protein GlmU from Clostridium acetobutylicum (strain ATCC 824 / DSM 792 / JCM 1419 / IAM 19013 / LMG 5710 / NBRC 13948 / NRRL B-527 / VKM B-1787 / 2291 / W).